The primary structure comprises 715 residues: MLRFTHRGLPSSTRFRNIFVRLNHIYVPWFYAIDVPNSKPYLPTYQTLHSPKKFKPFSVDDSNRLEKASKRQERRPVLVNEDYLFKVDLSHMELSPTYWEGPTYQVRRGVWFDSSNQPLSSDLTSEIEGLYKQLKFDDSNDDPTTTPPAESQDIFRLKGKYPVDKENEGEQKNGSSNKDENESTFKFILFANKQTAFLLSDLDGGKLQLAFLRSNLAQSLPINATMITRSYKYSSSATTKQTSTSFKAAKTPQTEVADGSNSSKSRSIETKLEKKVSNLFNLSDFLQLFNGNASKDQDDAQSLEKQMETDYNNADNSQGANASSKIEDGKNSGASDRQIRSNRRDVDNLILCVHGIGQTLGKKYEYVNFAHTVNLLRSNMKKIYNNSEKLQSLNTAPDYKSNCNVQVLPITWRHSISFQTDAKEENIENPDLPTLSQVTVNGVLPLRKLLADGLLDILLYVEPYYQDMILQQVTSQLNKTYRIFKEFNPEFDGKVHLVGHSLGSMILFDILSKQKKYELEFQVDNLFFIGSPIGLLKLIQRTKIGDRPEFPNDLERKLTVQRPQCKDIYNVYHVCDPISYRMEPLVSKEMAHYEQTYLPHCSEAYGLTSKVLEFGENIWKDLPGTDENNLQSKKTSPEKKEVKLSENLTRMLTGLNYTGRLDYAMSPSLLEVDFISAIKSHVSYFEEPDIAAFILKEILSKHENASEIYVKRKTG.

Residues 1 to 22 (MLRFTHRGLPSSTRFRNIFVRL) constitute a mitochondrion transit peptide. 3 disordered regions span residues 161–180 (YPVD…NKDE), 242–268 (TSTS…SRSI), and 311–340 (YNNA…RQIR). Residues 242 to 251 (TSTSFKAAKT) are compositionally biased toward low complexity. The span at 311 to 324 (YNNADNSQGANASS) shows a compositional bias: polar residues. The active site involves S501. Positions 519–700 (LEFQVDNLFF…AAFILKEILS (182 aa)) constitute a DDHD domain.

This sequence belongs to the PA-PLA1 family.

Its subcellular location is the mitochondrion. Its function is as follows. Probable phospholipase that hydrolyzes phosphatidic acid. This is Probable phospholipase YOR022C, mitochondrial from Saccharomyces cerevisiae (strain ATCC 204508 / S288c) (Baker's yeast).